Here is a 274-residue protein sequence, read N- to C-terminus: Proteasome subunit beta type-5-A (274 aa).

Positions 1-57 (MKLDTSGFETSMPMIGFGSSSDMLDELSSVPSFDLPRTKEFDGFQKKAKDMLKHAKG) are cleaved as a propeptide — removed in mature form. Thr58 functions as the Nucleophile in the catalytic mechanism.

This sequence belongs to the peptidase T1B family. As to quaternary structure, component of the 20S core complex of the 26S proteasome. The 26S proteasome is composed of a core protease (CP), known as the 20S proteasome, capped at one or both ends by the 19S regulatory particle (RP/PA700). The 20S proteasome core is composed of 28 subunits that are arranged in four stacked rings, resulting in a barrel-shaped structure. The two end rings are each formed by seven alpha subunits, and the two central rings are each formed by seven beta subunits. The catalytic chamber with the active sites is on the inside of the barrel. As to expression, ubiquitous low levels, higher expression in siliques and flowers.

It localises to the cytoplasm. The protein localises to the nucleus. The enzyme catalyses Cleavage of peptide bonds with very broad specificity.. Its function is as follows. The proteasome is a multicatalytic proteinase complex which is characterized by its ability to cleave peptides with Arg, Phe, Tyr, Leu, and Glu adjacent to the leaving group at neutral or slightly basic pH. The proteasome has an ATP-dependent proteolytic activity. The sequence is that of Proteasome subunit beta type-5-A (PBE1) from Arabidopsis thaliana (Mouse-ear cress).